A 226-amino-acid chain; its full sequence is Ras-related protein Rab11A (226 aa).

Residues 24 to 32, 43 to 49, 72 to 76, 130 to 133, and 160 to 162 each bind GTP; these read GDSAVGKSQ, SLDSKST, DTAGQ, NKCD, and SAL. The Effector region motif lies at 46–54; it reads SKSTIGVEF. S-geranylgeranyl cysteine attachment occurs at residues Cys222 and Cys223. A Cysteine methyl ester modification is found at Cys223. Positions 224 to 226 are cleaved as a propeptide — removed in mature form; it reads QAS.

Belongs to the small GTPase superfamily. Rab family.

The protein localises to the cell membrane. This chain is Ras-related protein Rab11A (RAB11A), found in Lotus japonicus (Lotus corniculatus var. japonicus).